Reading from the N-terminus, the 241-residue chain is UPF0173 metal-dependent hydrolase Haur_4333 (241 aa).

The protein belongs to the UPF0173 family.

The chain is UPF0173 metal-dependent hydrolase Haur_4333 from Herpetosiphon aurantiacus (strain ATCC 23779 / DSM 785 / 114-95).